The chain runs to 289 residues: MASLKDLRNRIASVKATQKITKAMQMVAAAKLRRAQMAAEAARPYAERMDSVLGNIASGVTLSADTPLLLSGTGKDEKHLLLVCTSERGLCGAFNTNIVRAVRERANLLIGQGKDVKFFCVGRKGYDQLRRLYPGQIVELVDLRSVRNLGFVNAHDIAEKIIDRFNKGEFDVCTLFFSHFKSVISQVPTAQQIIPATFEKAEGPSAVYDYEPEESEILADLLPRNVAVQIFRALLENQASFYGSQMSAMDNATRNAGDMIKKQTLIYNRTRQAMITKELIEIISGAEAV.

Belongs to the ATPase gamma chain family. In terms of assembly, F-type ATPases have 2 components, CF(1) - the catalytic core - and CF(0) - the membrane proton channel. CF(1) has five subunits: alpha(3), beta(3), gamma(1), delta(1), epsilon(1). CF(0) has three main subunits: a, b and c.

The protein localises to the cell inner membrane. Functionally, produces ATP from ADP in the presence of a proton gradient across the membrane. The gamma chain is believed to be important in regulating ATPase activity and the flow of protons through the CF(0) complex. The protein is ATP synthase gamma chain of Azorhizobium caulinodans (strain ATCC 43989 / DSM 5975 / JCM 20966 / LMG 6465 / NBRC 14845 / NCIMB 13405 / ORS 571).